The sequence spans 327 residues: DNA repair protein XRCC4 (327 aa).

Residues 1–211 (MERKVSRISL…QLEKNLKPER (211 aa)) form an interaction with IFFO1 region. Residue serine 53 is modified to Phosphoserine. 2 coiled-coil regions span residues 133 to 153 (IAEK…LLRD) and 183 to 213 (LNEK…ERET). 2 interaction with LIG4 regions span residues 179-210 (FILV…LKPE) and 179-211 (FILV…KPER). Serine 192 bears the Phosphoserine mark. Residue lysine 208 forms a Glycyl lysine isopeptide (Lys-Gly) (interchain with G-Cter in SUMO) linkage. Tyrosine 226 is modified (phosphotyrosine). At serine 229 the chain carries Phosphoserine. Threonine 230 is subject to Phosphothreonine. Phosphoserine is present on residues serine 249 and serine 253. Positions 255–327 (DVTDIAPSRK…RNSSPEDIFD (73 aa)) are disordered. The Nuclear localization signal motif lies at 263 to 268 (RKRRHH). Residue lysine 289 forms a Glycyl lysine isopeptide (Lys-Gly) (interchain with G-Cter in ubiquitin) linkage. Serine 294, serine 295, serine 308, and serine 313 each carry phosphoserine. Positions 308–327 (SAGNMSLETLRNSSPEDIFD) are enriched in polar residues. Phosphothreonine is present on threonine 316. A phosphoserine mark is found at serine 320 and serine 321.

Belongs to the XRCC4-XLF family. XRCC4 subfamily. Homodimer and homotetramer in solution. Interacts with NHEJ1/XLF; the interaction is direct and is mediated via a head-to-head interaction between N-terminal head regions. Interacts with LIG4; the LIG4-XRCC4 subcomplex has a 1:2 stoichiometry and XRCC4 is required for LIG4 stability. Component of the core long-range non-homologous end joining (NHEJ) complex (also named DNA-PK complex) composed of PRKDC, LIG4, XRCC4, XRCC6/Ku70, XRCC5/Ku86 and NHEJ1/XLF. Additional component of the NHEJ complex includes PAXX. Following autophosphorylation, PRKDC dissociates from DNA, leading to formation of the short-range NHEJ complex, composed of LIG4, XRCC4, XRCC6/Ku70, XRCC5/Ku86 and NHEJ1/XLF. Interacts with PRKDC; the interaction is direct. Interacts with XRCC6/Ku70; the interaction is direct. Interacts with APTX and APLF. Forms a heterotetramer with IFFO1; the interaction involves LIG4-free XRCC4 and leads to the relocalization of IFFO1 to the sites of DNA damage. Interacts with PNKP; mainly interacts with PNKP when phosphorylated at Thr-230, but is also able to interact at much lower level with PNKP when not unphosphorylated. Interacts with POLL (DNA polymerase lambda). As to quaternary structure, interacts with XKR4; interacts with the processed form of XKR4, which is cleaved by caspase. In terms of processing, phosphorylated by PRKDC at the C-terminus in response to DNA damage; Ser-253 constitutes the main phosphorylation sites. Phosphorylations by PRKDC at the C-terminus of XRCC4 and NHEJ1/XLF are highly redundant and regulate ability of the XRCC4-NHEJ1/XLF subcomplex to bridge DNA. Phosphorylation by PRKDC does not prevent interaction with NHEJ1/XLF but disrupts ability to bridge DNA and promotes detachment from DNA. Phosphorylation at Ser-320 and Ser-321 by PRKDC promotes recognition by the SCF(FBXW7) complex and subsequent ubiquitination via 'Lys-63'-linked ubiquitin. Phosphorylation at Thr-230 by CK2 promotes interaction with PNKP; regulating PNKP activity and localization to DNA damage sites. Phosphorylation by CK2 promotes interaction with APTX. Ubiquitinated at Lys-289 by the SCF(FBXW7) complex via 'Lys-63'-linked ubiquitination, thereby promoting double-strand break repair: the SCF(FBXW7) complex specifically recognizes XRCC4 when phosphorylated at Ser-320 and Ser-321 by PRKDC, and 'Lys-63'-linked ubiquitination facilitates DNA non-homologous end joining (NHEJ) by enhancing association with XRCC5/Ku80 and XRCC6/Ku70. Monoubiquitinated. Post-translationally, undergoes proteolytic processing by caspase-3 (CASP3). This generates the protein XRCC4, C-terminus (XRCC4/C), which translocates to the cytoplasm and activates phospholipid scramblase activity of XKR4, thereby promoting phosphatidylserine exposure on apoptotic cell surface.

It localises to the nucleus. The protein resides in the chromosome. The protein localises to the cytoplasm. Its function is as follows. DNA non-homologous end joining (NHEJ) core factor, required for double-strand break repair and V(D)J recombination. Acts as a scaffold protein that regulates recruitment of other proteins to DNA double-strand breaks (DSBs). Associates with NHEJ1/XLF to form alternating helical filaments that bridge DNA and act like a bandage, holding together the broken DNA until it is repaired. The XRCC4-NHEJ1/XLF subcomplex binds to the DNA fragments of a DSB in a highly diffusive manner and robustly bridges two independent DNA molecules, holding the broken DNA fragments in close proximity to one other. The mobility of the bridges ensures that the ends remain accessible for further processing by other repair factors. Plays a key role in the NHEJ ligation step of the broken DNA during DSB repair via direct interaction with DNA ligase IV (LIG4): the LIG4-XRCC4 subcomplex reseals the DNA breaks after the gap filling is completed. XRCC4 stabilizes LIG4, regulates its subcellular localization and enhances LIG4's joining activity. Binding of the LIG4-XRCC4 subcomplex to DNA ends is dependent on the assembly of the DNA-dependent protein kinase complex DNA-PK to these DNA ends. Promotes displacement of PNKP from processed strand break termini. Functionally, acts as an activator of the phospholipid scramblase activity of XKR4. This form, which is generated upon caspase-3 (CASP3) cleavage, translocates into the cytoplasm and interacts with XKR4, thereby promoting phosphatidylserine scramblase activity of XKR4 and leading to phosphatidylserine exposure on apoptotic cell surface. This chain is DNA repair protein XRCC4, found in Cricetulus griseus (Chinese hamster).